The chain runs to 234 residues: Sugar fermentation stimulation protein homolog (234 aa).

Belongs to the SfsA family.

This chain is Sugar fermentation stimulation protein homolog, found in Shewanella baltica (strain OS223).